Reading from the N-terminus, the 227-residue chain is ATP-dependent dethiobiotin synthetase BioD (227 aa).

ATP is bound at residue 13-18; sequence DIGKTY. Thr17 serves as a coordination point for Mg(2+). Lys38 is a catalytic residue. Ser42 contacts substrate. ATP contacts are provided by residues Asp55, 116–119, and 179–180; these read EGSG and NN. Mg(2+) contacts are provided by Asp55 and Glu116.

Belongs to the dethiobiotin synthetase family. Homodimer. Mg(2+) is required as a cofactor.

The protein resides in the cytoplasm. It catalyses the reaction (7R,8S)-7,8-diammoniononanoate + CO2 + ATP = (4R,5S)-dethiobiotin + ADP + phosphate + 3 H(+). The protein operates within cofactor biosynthesis; biotin biosynthesis; biotin from 7,8-diaminononanoate: step 1/2. In terms of biological role, catalyzes a mechanistically unusual reaction, the ATP-dependent insertion of CO2 between the N7 and N8 nitrogen atoms of 7,8-diaminopelargonic acid (DAPA, also called 7,8-diammoniononanoate) to form a ureido ring. The chain is ATP-dependent dethiobiotin synthetase BioD from Clostridium botulinum (strain Eklund 17B / Type B).